A 134-amino-acid chain; its full sequence is Acyl-CoA thioester hydrolase YbgC (134 aa).

Residue Asp18 is part of the active site.

This sequence belongs to the 4-hydroxybenzoyl-CoA thioesterase family.

The protein localises to the cell inner membrane. Its function is as follows. Thioesterase that appears to be involved in phospholipid metabolism. Some specific acyl-ACPs could be physiological substrates. Displays acyl-CoA thioesterase activity on malonyl-CoA in vitro, catalyzing the hydrolysis of the thioester bond. This Escherichia coli O157:H7 protein is Acyl-CoA thioester hydrolase YbgC (ybgC).